Consider the following 305-residue polypeptide: Carbonic anhydrase 4 (305 aa).

The N-terminal stretch at 1 to 17 (MQLLLALLALAYVAPST) is a signal peptide. Residues 20-278 (SGWCYEIQTK…LGKRQVFKSH (259 aa)) enclose the Alpha-carbonic anhydrase domain. Intrachain disulfides connect cysteine 23–cysteine 35 and cysteine 45–cysteine 222. Histidine 87 serves as the catalytic Proton donor/acceptor. Zn(2+) contacts are provided by histidine 114 and histidine 116. Residue asparagine 123 is glycosylated (N-linked (GlcNAc...) asparagine). Histidine 139 lines the Zn(2+) pocket. N-linked (GlcNAc...) asparagine glycosylation occurs at asparagine 214. Residue 218–219 (TT) coordinates substrate. Serine 277 carries GPI-anchor amidated serine lipidation. The propeptide at 278 to 305 (HAPGQLLSLPLPTLLVPTLTCLVANFLQ) is removed in mature form.

This sequence belongs to the alpha-carbonic anhydrase family. Interacts with SLC4A4. The cofactor is Zn(2+).

It localises to the cell membrane. It carries out the reaction hydrogencarbonate + H(+) = CO2 + H2O. Its activity is regulated as follows. Inhibited by acetazolamide. Its function is as follows. Catalyzes the reversible hydration of carbon dioxide into bicarbonate and protons and thus is essential to maintaining intracellular and extracellular pH. May stimulate the sodium/bicarbonate transporter activity of SLC4A4 that acts in pH homeostasis. It is essential for acid overload removal from the retina and retina epithelium, and acid release in the choriocapillaris in the choroid. The sequence is that of Carbonic anhydrase 4 (Ca4) from Mus musculus (Mouse).